A 233-amino-acid polypeptide reads, in one-letter code: Orotidine 5'-phosphate decarboxylase (233 aa).

Substrate is bound by residues Asp10, Lys32, 59 to 68 (DLKFHDIPNT), Thr119, Arg180, Gln189, Gly209, and Arg210. The active-site Proton donor is the Lys61.

The protein belongs to the OMP decarboxylase family. Type 1 subfamily. Homodimer.

The catalysed reaction is orotidine 5'-phosphate + H(+) = UMP + CO2. It participates in pyrimidine metabolism; UMP biosynthesis via de novo pathway; UMP from orotate: step 2/2. In terms of biological role, catalyzes the decarboxylation of orotidine 5'-monophosphate (OMP) to uridine 5'-monophosphate (UMP). The polypeptide is Orotidine 5'-phosphate decarboxylase (Pasteurella multocida (strain Pm70)).